Reading from the N-terminus, the 194-residue chain is Isopentenyl-diphosphate Delta-isomerase (194 aa).

2 residues coordinate Mn(2+): histidine 23 and histidine 30. A Nudix hydrolase domain is found at 28–162 (PLHLAFSCYV…TTDISPWCRQ (135 aa)). Cysteine 65 is a catalytic residue. Histidine 67 lines the Mn(2+) pocket. Glutamate 85 lines the Mg(2+) pocket. Mn(2+) contacts are provided by glutamate 112 and glutamate 114. Glutamate 114 is a catalytic residue.

Belongs to the IPP isomerase type 1 family. Mg(2+) serves as cofactor. The cofactor is Mn(2+).

It localises to the cytoplasm. The catalysed reaction is isopentenyl diphosphate = dimethylallyl diphosphate. Its pathway is isoprenoid biosynthesis; dimethylallyl diphosphate biosynthesis; dimethylallyl diphosphate from isopentenyl diphosphate: step 1/1. Catalyzes the 1,3-allylic rearrangement of the homoallylic substrate isopentenyl (IPP) to its highly electrophilic allylic isomer, dimethylallyl diphosphate (DMAPP). The chain is Isopentenyl-diphosphate Delta-isomerase from Saccharopolyspora erythraea (strain ATCC 11635 / DSM 40517 / JCM 4748 / NBRC 13426 / NCIMB 8594 / NRRL 2338).